The following is a 439-amino-acid chain: Ribosomal protein uS12 methylthiotransferase RimO (439 aa).

The 111-residue stretch at 4 to 114 (PKVGFVSLGC…VVRAVHGVAP (111 aa)) folds into the MTTase N-terminal domain. [4Fe-4S] cluster-binding residues include Cys-13, Cys-49, Cys-78, Cys-147, Cys-151, and Cys-154. Residues 133-370 (LTPRHYAYLK…MEHQQAISTA (238 aa)) form the Radical SAM core domain. A TRAM domain is found at 373-439 (STRVGREIDV…EYDLWGERIA (67 aa)).

This sequence belongs to the methylthiotransferase family. RimO subfamily. The cofactor is [4Fe-4S] cluster.

Its subcellular location is the cytoplasm. It carries out the reaction L-aspartate(89)-[ribosomal protein uS12]-hydrogen + (sulfur carrier)-SH + AH2 + 2 S-adenosyl-L-methionine = 3-methylsulfanyl-L-aspartate(89)-[ribosomal protein uS12]-hydrogen + (sulfur carrier)-H + 5'-deoxyadenosine + L-methionine + A + S-adenosyl-L-homocysteine + 2 H(+). Catalyzes the methylthiolation of an aspartic acid residue of ribosomal protein uS12. The sequence is that of Ribosomal protein uS12 methylthiotransferase RimO from Bordetella parapertussis (strain 12822 / ATCC BAA-587 / NCTC 13253).